Here is a 665-residue protein sequence, read N- to C-terminus: Envelope glycoprotein (665 aa).

The N-terminal stretch at 1-31 (MESTTLSKPFKNQVNPWGPLIVLLILGRVNP) is a signal peptide. The interval 32-267 (VALGNSPHQV…KITDSGPRVP (236 aa)) is receptor-binding domain (RBD). Residues 32–605 (VALGNSPHQV…FNGSPWFTTL (574 aa)) lie on the Extracellular side of the membrane. Residue Asn-43 is glycosylated (N-linked (GlcNAc...) asparagine; by host). 5 disulfide bridges follow: Cys-77/Cys-129, Cys-103/Cys-118, Cys-104/Cys-114, Cys-152/Cys-172, and Cys-164/Cys-177. Residue Asp-117 participates in Zn(2+) binding. N-linked (GlcNAc...) asparagine; by host glycans are attached at residues Asn-199 and Asn-211. An intrachain disulfide couples Cys-209 to Cys-215. The tract at residues 266 to 307 (VPIGPNPVLSDQRPPSQPRSPPHSNSTPTETPLTLPEPPPAG) is disordered. N-linked (GlcNAc...) asparagine; by host glycosylation is present at Asn-324. 6 disulfides stabilise this stretch: Cys-334-Cys-337, Cys-334-Cys-558, Cys-364-Cys-418, Cys-383-Cys-395, Cys-425-Cys-438, and Cys-550-Cys-557. The CXXC signature appears at 334–337 (CWLC). N-linked (GlcNAc...) asparagine; by host glycans are attached at residues Asn-356 and Asn-363. Asn-396, Asn-400, and Asn-432 each carry an N-linked (GlcNAc...) asparagine; by host glycan. Residues 470-490 (VSLTLALLLGGLTMGGIAAGI) form a fusion peptide region. Positions 505–532 (AAVHDDLKEVEKSITNLEKSLTSLSEVV) form a coiled coil. Residues 533–549 (LQNRRGLDLLFLKEGGL) are immunosuppression. The CX6CC signature appears at 550–558 (CAALKEECC). The helical transmembrane segment at 606-626 (ISTIMGPLIVLLLILLLGPCI) threads the bilayer. The S-palmitoyl cysteine; by host moiety is linked to residue Cys-625. At 627–665 (LNRLVQFVKDRISVVQALVLTQQYHQLKSIDPEEMESRE) the chain is on the cytoplasmic side. The short motif at 650 to 653 (YHQL) is the YXXL motif; contains endocytosis signal element.

As to quaternary structure, the mature envelope protein (Env) consists of a trimer of SU-TM heterodimers attached by a labile interchain disulfide bond. Post-translationally, specific enzymatic cleavages in vivo yield mature proteins. Envelope glycoproteins are synthesized as an inactive precursor that is N-glycosylated and processed likely by host cell furin or by a furin-like protease in the Golgi to yield the mature SU and TM proteins. The cleavage site between SU and TM requires the minimal sequence [KR]-X-[KR]-R. The R-peptide is released from the C-terminus of the cytoplasmic tail of the TM protein upon particle formation as a result of proteolytic cleavage by the viral protease. Cleavage of this peptide is required for TM to become fusogenic. The CXXC motif is highly conserved across a broad range of retroviral envelope proteins. It is thought to participate in the formation of a labile disulfide bond possibly with the CX6CC motif present in the transmembrane protein. Isomerization of the intersubunit disulfide bond to an SU intrachain disulfide bond is thought to occur upon receptor recognition in order to allow membrane fusion. In terms of processing, the transmembrane protein is palmitoylated. Post-translationally, the R-peptide is palmitoylated.

Its subcellular location is the virion membrane. It localises to the host cell membrane. The surface protein (SU) attaches the virus to the host cell by binding to its receptor. This interaction triggers the refolding of the transmembrane protein (TM) and is thought to activate its fusogenic potential by unmasking its fusion peptide. Fusion occurs at the host cell plasma membrane. Its function is as follows. The transmembrane protein (TM) acts as a class I viral fusion protein. Under the current model, the protein has at least 3 conformational states: pre-fusion native state, pre-hairpin intermediate state, and post-fusion hairpin state. During viral and target cell membrane fusion, the coiled coil regions (heptad repeats) assume a trimer-of-hairpins structure, positioning the fusion peptide in close proximity to the C-terminal region of the ectodomain. The formation of this structure appears to drive apposition and subsequent fusion of viral and target cell membranes. Membranes fusion leads to delivery of the nucleocapsid into the cytoplasm. The protein is Envelope glycoprotein (env) of Radiation murine leukemia virus.